A 333-amino-acid polypeptide reads, in one-letter code: MESSGNPESTTFFYYDLQSQPCENQAWVFATLATTVLYCLVFLLSLVGNSLVLWVLVKYESLESLTNIFILNLCLSDLVFACLLPVWISPYHWGWVLGDFLCKLLNMIFSISLYSSIFFLTIMTIHRYLSVVSPLSTLRVPTLRCRVLVTMAVWVASILSSILDTIFHKVLSSGCDYSELTWYLTSVYQHNLFFLLSLGIILFCYVEILRTLFRSRSKRRHRTVKLIFAIVVAYFLSWGPYNFTLFLQTLFRTQIIRSCEAKQQLEYALLICRNLAFSHCCFNPVLYVFVGVKFRTHLKHVLRQFWFCRLQAPSPASIPHSPGAFAYEGASFY.

The Extracellular portion of the chain corresponds to methionine 1–threonine 31. Residues leucine 32–tyrosine 59 form a helical membrane-spanning segment. The Cytoplasmic segment spans residues glutamate 60 to phenylalanine 69. The helical transmembrane segment at isoleucine 70–serine 89 threads the bilayer. Residues proline 90–lysine 103 are Extracellular-facing. A disulfide bridge connects residues cysteine 102 and cysteine 175. The chain crosses the membrane as a helical span at residues leucine 104–isoleucine 125. The Cytoplasmic segment spans residues histidine 126–threonine 142. A helical membrane pass occupies residues leucine 143–phenylalanine 167. Residues histidine 168–histidine 190 are Extracellular-facing. The chain crosses the membrane as a helical span at residues asparagine 191–leucine 209. Residues arginine 210–lysine 225 lie on the Cytoplasmic side of the membrane. The chain crosses the membrane as a helical span at residues leucine 226 to leucine 250. The Extracellular segment spans residues phenylalanine 251–tyrosine 267. Residues alanine 268–glycine 291 traverse the membrane as a helical segment. Over valine 292 to tyrosine 333 the chain is Cytoplasmic.

It belongs to the G-protein coupled receptor 1 family.

It is found in the cell membrane. Its function is as follows. Receptor for chemokines SCYC1 and SCYC2. Subsequently transduces a signal by increasing the intracellular calcium ions level. Receptor for XCL1/Lymphotactin. The polypeptide is Chemokine XC receptor 1 (XCR1) (Homo sapiens (Human)).